The primary structure comprises 66 residues: UPF0337 protein BA_0987/GBAA_0987/BAS0923 (66 aa).

The interval M1 to K22 is disordered. Residues K13–K22 show a composition bias toward basic and acidic residues.

It belongs to the UPF0337 (CsbD) family.

This Bacillus anthracis protein is UPF0337 protein BA_0987/GBAA_0987/BAS0923.